A 2671-amino-acid polypeptide reads, in one-letter code: Stalled ribosome sensor GCN1 (2671 aa).

Position 2 is an N-acetylalanine (alanine 2). HEAT repeat units lie at residues 140 to 178 (NKLVEVQCLLLLEVLGGSHKHAVDGAVKKLTKLWKENPG), 257 to 293 (EFKDLILPTIQKSLLRSPENVIETISSLLASVTLDLS), 294 to 331 (QYALDIVKGLANQLKSNSPRLMDEAVLALRNLARQCSD), 385 to 423 (CVAELFIPFLQQEVHEGTLVHAVSILALWCNRFTTEVPK), 425 to 459 (LTDWFKKVFSLKTSTSAVRHAYLQCMLASFRGDTL), 460 to 500 (LQAL…SKLS), 560 to 597 (SKVQQYYRVLVAVLLSRTWHVRRQAQQTVRKLLSSLGG), 599 to 636 (KLANGLLDELKTVLNSHKVLPLEALVTDAGEVTEMGKT), 700 to 732 (AFITRHLDQIIPRITTQSPLNQSSMNAMGSLSV), and 733 to 772 (LSPDRVLPQLISTITASVQNPALCLVTREEFSIMQTPAGE). The residue at position 729 (serine 729) is a Phosphoserine. At serine 786 the chain carries Phosphoserine. A coiled-coil region spans residues 804 to 865 (QIIEMELKEE…EAALGLLDAI (62 aa)). 37 HEAT repeats span residues 879–918 (VLVDAFLPLLKSPLAAPRVKGPFLSLAACVMPPRLKTLGT), 979–1016 (SLVFPMLKMVLTEMPYHSEEEEEQMAQILQILTVHAQL), 1035–1072 (LPRVAMLRLLTWVIGTGSPRLQVLASDTLTALCASSSG), 1078–1115 (FAEQEEVDVLLAALQSPCASVRETALRGLMELRLVLPS), 1155–1192 (DLQSDLCSLLIDDVIYHEAAVRQAGAEALSQAVARYQR), 1210–1250 (YRPP…YLDS), 1251–1289 (SQVKPLFQFFVPDALNDRNPDVRKCMLDAALATLNAHGK), 1290–1332 (ENVN…HLDK), 1335–1372 (PKVKPIVAKLIAALSTPSQQVQESVASCLPPLVPAVKE), 1374–1410 (AGGMIQRLMQQLLESDKYAERKGAAYGLAGLVKGLGI), 1413–1451 (LKQQEMMAALTDAIQDKKNFRRREGALFAFEMLCTMLGK), 1455–1492 (PYVVHVLPHLLLCFGDGNQYVREAADDCAKAVMSNLSA), 1493–1530 (HGVKLVLPSLLAALEEESWRTKAGSVELLGAMAYCAPK), 1534–1571 (SCLPNIVPKLTEVLTDSHVKVQKAGQQALRQIGSVIRN), 1573–1609 (EILAIAPVLLDALTDPSRKTQKCLQTLLDTKFVHFID), 1611–1648 (PSLALIMPIVQRAFQDRSTDTRKMAAQIIGNMYSLTDQ), 1653–1690 (PYLPSVTPGLKASLLDPVPEVRTVSAKALGAMVKGMGE), 1692–1729 (CFEDLLPWLMETLTYEQSSVDRSGAAQGLAEVMAGLGV), 1731–1769 (KLEKLMPEIVATASKVDIAPHVRDGYIMMFNYLPITFGD), 1773–1810 (PYVGPIIPCILKALADENEFVRDTALRAGQRVISMYAE), 1812–1848 (AIALLLPQLEQGLFDDLWRIRFSSVQLLGDLLFHISG), 1921–1958 (EILPTLFGLLLGFLASTCADKRTIAARTLGDLVRKLGE), 1959–1996 (KILPEIIPILEEGLRSQKSDERQGVCIGLSEIMKSTSR), 2001–2038 (FFSESLVPTARKALCDPLEEVREAAAKTFEQLHSTIGH), 2039–2074 (QALEDILPFLLKQLDDEEVSEFALDGLKQVMAVKSR), 2076–2108 (VLPYLVPKLTTPPVNTRVLAFLSSVAGDALTRH), 2111–2146 (VILPAVMLALKEKLGTPDEQLEMANCQAVILSVEDD), 2147–2184 (TGHRIIIEDLLEATRSPEVGMRQAAAIILNMYCSRSKA), 2188–2225 (SHLRSLVSGLIRLFNDSSPVVLEESWDALNAITKKLDA), 2259–2296 (RGVTSILPVLREGVLTGSPEQKEEAAKGLGLVIRLTSA), 2301–2338 (PSVVSITGPLIRILGDRFNWTVKAALLETLSLLLGKVG), 2339–2380 (IALK…IHVK), 2382–2417 (DPLFTELLNGIRAVEDPGIRDTMLQALRFVIQGAGS), 2422–2459 (AIRKNLVSLLLSMLGHDEDNTRISTAGCLGELCAFLTD), 2546–2583 (QLPPRLSSLLIKCLQNPCSDIRLVAEKMIWWANKEPRP), 2588–2625 (QTIKPILKALLDNTKDKNTVVRAYSDQAIVNLLKMRRG), and 2627–2661 (ELLQSLSKILDVASLEALNECSRRSLRKLACQADS). Residues 2260–2408 (GVTSILPVLR…GIRDTMLQAL (149 aa)) form an RWDBD region region. Serine 2276 carries the post-translational modification Phosphoserine.

It belongs to the GCN1 family. As to quaternary structure, interacts with EIF2AK4/GCN2; this interaction stimulates the EIF2AK4/GCN2 kinase activity and is impaired by IMPACT upon a variety of stress conditions, such as amino acid depletion, UV-C irradiation, proteasome inhibitor treatment and glucose deprivation. Interacts with IMPACT; this prevents the interaction of GCN1 with EIF2AK4/GCN2 and inhibits EIF2AK4/GCN2 kinase activity. Interacts with RNF14; interaction takes place following ribosome stalling and promotes recruitment of RNF14. Expressed in the hypothalamus, cortex and hippocampus.

The protein resides in the cytoplasm. Ribosome collision sensor that plays a key role in the RNF14-RNF25 translation quality control pathway, a pathway that takes place when a ribosome has stalled during translation, and which promotes ubiquitination and degradation of translation factors on stalled ribosomes. Directly binds to the ribosome and acts as a sentinel for colliding ribosomes: activated following ribosome stalling and promotes recruitment of RNF14, which directly ubiquitinates EEF1A1/eEF1A, leading to its degradation. In addition to EEF1A1/eEF1A, the RNF14-RNF25 translation quality control pathway mediates degradation of ETF1/eRF1 and ubiquitination of ribosomal protein. GCN1 also acts as a positive activator of the integrated stress response (ISR) by mediating activation of EIF2AK4/GCN2 in response to amino acid starvation. Interaction with EIF2AK4/GCN2 on translating ribosomes stimulates EIF2AK4/GCN2 kinase activity, leading to phosphorylation of eukaryotic translation initiation factor 2 (eIF-2-alpha/EIF2S1). EIF2S1/eIF-2-alpha phosphorylation converts EIF2S1/eIF-2-alpha into a global protein synthesis inhibitor, leading to a global attenuation of cap-dependent translation, and thus to a reduced overall utilization of amino acids, while concomitantly initiating the preferential translation of ISR-specific mRNAs, such as the transcriptional activator ATF4, and hence allowing ATF4-mediated reprogramming of amino acid biosynthetic gene expression to alleviate nutrient depletion. This is Stalled ribosome sensor GCN1 from Mus musculus (Mouse).